Consider the following 337-residue polypeptide: Protein MICROTUBULE BINDING PROTEIN 2C (337 aa).

A disordered region spans residues 80 to 147 (RGSMTYTKMP…STSSLTEKDR (68 aa)). Basic and acidic residues predominate over residues 89–103 (PSRESLYKKTSEVKG). A compositionally biased stretch (polar residues) spans 120-142 (KNVSSSQDGYAENFSTPSSTSSL). Coiled-coil stretches lie at residues 143–194 (TEKD…MKKD), 223–250 (VEKLEWEAMTSSKKVERLQEDLDLLQGE), and 294–314 (LQKMEAAREAYIAAVAAAKEN).

It belongs to the microtubule binding protein 2C family. Interacts with KN-1. Binds to tobacco mosaic virus movement protein (TMV-MP) at microtubules. As to expression, constitutively expressed in leaves.

Its subcellular location is the cytoplasm. The protein localises to the cytoskeleton. Functionally, prevents homeodomain proteins (e.g. STM) association to plasmodesmata and, consequently, cell-to-cell transport. Binds to RNA. Alters KN1 RNA-binding capacity. Regulates cytoskeleton (e.g. actin) organization that determinates cell shape. Interferes with cell-to-cell transport of tobacco mosaic virus movement protein (TMV-MP) by mediating its accumulation at microtubules, thus interfering with cell-to-cell virus movement. This Nicotiana tabacum (Common tobacco) protein is Protein MICROTUBULE BINDING PROTEIN 2C.